The chain runs to 51 residues: Large ribosomal subunit protein eL39 (51 aa).

Belongs to the eukaryotic ribosomal protein eL39 family.

This is Large ribosomal subunit protein eL39 (rpl39e) from Thermoplasma acidophilum (strain ATCC 25905 / DSM 1728 / JCM 9062 / NBRC 15155 / AMRC-C165).